A 267-amino-acid polypeptide reads, in one-letter code: 14-3-3-like protein GF14 phi (267 aa).

The residue at position 2 (A2) is an N-acetylalanine. S73 and S196 each carry phosphoserine. Residue T217 is modified to Phosphothreonine. The interval 244–267 is disordered; that stretch reads MQDESPEEIKEAAAPKPAEEQKEI. S248 is subject to Phosphoserine. Basic and acidic residues predominate over residues 250 to 267; it reads EEIKEAAAPKPAEEQKEI.

It belongs to the 14-3-3 family. As to quaternary structure, interacts with FD. Interacts with CINV1.

The protein localises to the nucleus. It is found in the cytoplasm. Is associated with a DNA binding complex that binds to the G box, a well-characterized cis-acting DNA regulatory element found in plant genes. This is 14-3-3-like protein GF14 phi (GRF4) from Arabidopsis thaliana (Mouse-ear cress).